We begin with the raw amino-acid sequence, 26 residues long: Beta-hexosaminidase (26 aa).

Glycosylated. In terms of tissue distribution, detected in dry seeds and cotyledons.

It catalyses the reaction Hydrolysis of terminal non-reducing N-acetyl-D-hexosamine residues in N-acetyl-beta-D-hexosaminides.. Inhibited by AgNO(3) at a concentration of 0.1 mM. Strongly inhibited by CdCl(2), ZnCl(2) and FeCl(3) and moderately by CoCl(2), CuSO(4) and NiCl(2) at 10 mM concentration. CaCl(2), MgCl(2), MnSO(4) and KI also have a slight inhibitory effect of 20%-25% at 10 mM concentration. Activated to a small extent by MgCl(2) at 0.1 mM concentration but inhibited with increasing concentration. Not affected by carbohydrates such as fucose, galactose and glucose but displays a slight decrease in activity up to 25% with lactose, alpha-mannose and N-acetyl-galactosamine (GalNAc). Has hexosaminidase activity. Active with both p-nitrophenyl-beta-D-N-acetylglucosamine (pNP-GlcNAc) and p-nitrophenyl-beta-D-N-acetylgalactosamine (pNP-GalNAc). Not active toward p-nitrophenyl-beta-D-N,N'-diacetylchitobiose (pNP-(GlcNAc)2) or p-nitrophenyl-beta-D-N,N',N''-triacetylchitobiose (pNP-(GlcNAc)3). Removes terminal GlcNAc and may be involved in storage protein degradation. The protein is Beta-hexosaminidase of Lupinus albus (White lupine).